A 102-amino-acid polypeptide reads, in one-letter code: ATP-dependent Clp protease adapter protein ClpS (102 aa).

It belongs to the ClpS family. In terms of assembly, binds to the N-terminal domain of the chaperone ClpA.

Involved in the modulation of the specificity of the ClpAP-mediated ATP-dependent protein degradation. The chain is ATP-dependent Clp protease adapter protein ClpS from Wolinella succinogenes (strain ATCC 29543 / DSM 1740 / CCUG 13145 / JCM 31913 / LMG 7466 / NCTC 11488 / FDC 602W) (Vibrio succinogenes).